The primary structure comprises 829 residues: Transcription activator GutR (829 aa).

Positions 42-61 form a DNA-binding region, H-T-H motif; sequence IDKIALQLGVSPNTIKSWIG. 200 to 207 contacts ATP; the sequence is GWAGMGKT. 3 TPR repeats span residues 697 to 730, 736 to 769, and 775 to 808; these read HRVL…SSTY, IEAY…KHNA, and IYYH…IDSW.

Activator of the glucitol dehydrogenase gene (gutB). The polypeptide is Transcription activator GutR (gutR) (Bacillus subtilis (strain 168)).